An 89-amino-acid chain; its full sequence is Small ribosomal subunit protein uS15 (89 aa).

Belongs to the universal ribosomal protein uS15 family. Part of the 30S ribosomal subunit. Forms a bridge to the 50S subunit in the 70S ribosome, contacting the 23S rRNA.

One of the primary rRNA binding proteins, it binds directly to 16S rRNA where it helps nucleate assembly of the platform of the 30S subunit by binding and bridging several RNA helices of the 16S rRNA. Its function is as follows. Forms an intersubunit bridge (bridge B4) with the 23S rRNA of the 50S subunit in the ribosome. This Mesorhizobium japonicum (strain LMG 29417 / CECT 9101 / MAFF 303099) (Mesorhizobium loti (strain MAFF 303099)) protein is Small ribosomal subunit protein uS15.